Consider the following 443-residue polypeptide: Phosphoglucosamine mutase (443 aa).

The Phosphoserine intermediate role is filled by serine 100. Mg(2+) contacts are provided by serine 100, aspartate 240, aspartate 242, and aspartate 244. The residue at position 100 (serine 100) is a Phosphoserine.

Belongs to the phosphohexose mutase family. Mg(2+) is required as a cofactor. Activated by phosphorylation.

The enzyme catalyses alpha-D-glucosamine 1-phosphate = D-glucosamine 6-phosphate. Catalyzes the conversion of glucosamine-6-phosphate to glucosamine-1-phosphate. The chain is Phosphoglucosamine mutase from Carboxydothermus hydrogenoformans (strain ATCC BAA-161 / DSM 6008 / Z-2901).